A 121-amino-acid chain; its full sequence is MARIAGVDIPRDKRVEVALTYIYGIGLTRAKTILTKSDVNPDIRVKDLEDGDVQKLRTALEAFTIEGDLRRQEGMALKRLQDIGCLRGRRHRMSLPVRGQRTRTNARTRRGARKTVAGKKK.

The segment at 97 to 121 is disordered; sequence VRGQRTRTNARTRRGARKTVAGKKK. Residues 100–121 are compositionally biased toward basic residues; sequence QRTRTNARTRRGARKTVAGKKK.

This sequence belongs to the universal ribosomal protein uS13 family. In terms of assembly, part of the 30S ribosomal subunit. Forms a loose heterodimer with protein S19. Forms two bridges to the 50S subunit in the 70S ribosome.

Functionally, located at the top of the head of the 30S subunit, it contacts several helices of the 16S rRNA. In the 70S ribosome it contacts the 23S rRNA (bridge B1a) and protein L5 of the 50S subunit (bridge B1b), connecting the 2 subunits; these bridges are implicated in subunit movement. Contacts the tRNAs in the A and P-sites. This is Small ribosomal subunit protein uS13 from Prochlorococcus marinus (strain MIT 9313).